The sequence spans 447 residues: ATP-dependent protease ATPase subunit HslU (447 aa).

ATP-binding positions include Ile-18, 60 to 65 (GVGKTE), Asp-260, Glu-325, and Arg-397.

Belongs to the ClpX chaperone family. HslU subfamily. In terms of assembly, a double ring-shaped homohexamer of HslV is capped on each side by a ring-shaped HslU homohexamer. The assembly of the HslU/HslV complex is dependent on binding of ATP.

Its subcellular location is the cytoplasm. ATPase subunit of a proteasome-like degradation complex; this subunit has chaperone activity. The binding of ATP and its subsequent hydrolysis by HslU are essential for unfolding of protein substrates subsequently hydrolyzed by HslV. HslU recognizes the N-terminal part of its protein substrates and unfolds these before they are guided to HslV for hydrolysis. The polypeptide is ATP-dependent protease ATPase subunit HslU (Paraburkholderia phymatum (strain DSM 17167 / CIP 108236 / LMG 21445 / STM815) (Burkholderia phymatum)).